A 470-amino-acid polypeptide reads, in one-letter code: Argininosuccinate lyase (470 aa).

This sequence belongs to the lyase 1 family. Argininosuccinate lyase subfamily.

It is found in the cytoplasm. It carries out the reaction 2-(N(omega)-L-arginino)succinate = fumarate + L-arginine. It participates in amino-acid biosynthesis; L-arginine biosynthesis; L-arginine from L-ornithine and carbamoyl phosphate: step 3/3. The chain is Argininosuccinate lyase from Mycobacterium tuberculosis (strain CDC 1551 / Oshkosh).